Here is a 249-residue protein sequence, read N- to C-terminus: Protein twisted gastrulation (249 aa).

An N-terminal signal peptide occupies residues 1-23 (MQLLCYFVILFVGIAPWSSLAND). The N-linked (GlcNAc...) asparagine glycan is linked to asparagine 199.

This sequence belongs to the twisted gastrulation protein family. As to quaternary structure, component of a complex composed of dpp, sog and tsg. As to expression, first appears in stage 4 embryos, expressed in two domains: a broad mid-dorsal saddle and an anterior cap, expression between the domains is continuous across the dorsal midline. At stage 5, expression is refined into 4 graded stripes in the mid-dorsal region and a paired domain in the anterior region. During stages 7 and 8, anterior expression fades and the mid dorsal stripes are located between the anterior and posterior transverse furrow (ATF and PTF). Expressing cells become incorporated into the deepening PTF.

Its subcellular location is the secreted. Functionally, involved in dorsal-ventral patterning. Required for specification of a narrow strip of dorsal midline cells that will give rise to the amnioserosa, but not for specification of dorsal ectoderm cells. Inhibits BMP signaling; enhances the binding of sog to dpp, thus enhancing the antagonistic activity of sog. This Drosophila melanogaster (Fruit fly) protein is Protein twisted gastrulation (tsg).